A 341-amino-acid polypeptide reads, in one-letter code: Ribosomal RNA small subunit methyltransferase H (341 aa).

Residues 47-49, aspartate 64, phenylalanine 91, aspartate 109, and glutamine 116 each bind S-adenosyl-L-methionine; that span reads GGY. The tract at residues 292–319 is disordered; that stretch reads VAASEEEASRNPRARSAKLRAGVRTEAP.

This sequence belongs to the methyltransferase superfamily. RsmH family.

The protein resides in the cytoplasm. It catalyses the reaction cytidine(1402) in 16S rRNA + S-adenosyl-L-methionine = N(4)-methylcytidine(1402) in 16S rRNA + S-adenosyl-L-homocysteine + H(+). Specifically methylates the N4 position of cytidine in position 1402 (C1402) of 16S rRNA. The protein is Ribosomal RNA small subunit methyltransferase H of Rhizobium meliloti (strain 1021) (Ensifer meliloti).